A 666-amino-acid polypeptide reads, in one-letter code: Probable potassium transport system protein Kup (666 aa).

A run of 12 helical transmembrane segments spans residues 16–36, 58–78, 100–120, 141–161, 165–185, 221–241, 253–273, 294–314, 343–363, 373–393, 399–419, and 424–444; these read GFII…LYTM, ISLI…LIAL, PWLI…GALT, IYQN…VLFG, FGTG…FSFL, IFIL…YSDL, WPFV…WILA, VYLV…LISG, LYIP…VLYF, YGLA…YYLI, PFLA…FFWA, and FMHG…VMFI.

Belongs to the HAK/KUP transporter (TC 2.A.72) family.

It is found in the cell membrane. The catalysed reaction is K(+)(in) + H(+)(in) = K(+)(out) + H(+)(out). Its function is as follows. Transport of potassium into the cell. Likely operates as a K(+):H(+) symporter. The chain is Probable potassium transport system protein Kup from Streptococcus pyogenes serotype M6 (strain ATCC BAA-946 / MGAS10394).